Consider the following 207-residue polypeptide: Segregation and condensation protein B (207 aa).

The interval 173 to 207 (DDTAESDNDSADLYYRQFEQTLNETGPETAPKGEQ) is disordered.

This sequence belongs to the ScpB family. As to quaternary structure, homodimer. Homodimerization may be required to stabilize the binding of ScpA to the Smc head domains. Component of a cohesin-like complex composed of ScpA, ScpB and the Smc homodimer, in which ScpA and ScpB bind to the head domain of Smc. The presence of the three proteins is required for the association of the complex with DNA.

The protein localises to the cytoplasm. Functionally, participates in chromosomal partition during cell division. May act via the formation of a condensin-like complex containing Smc and ScpA that pull DNA away from mid-cell into both cell halves. This is Segregation and condensation protein B from Latilactobacillus sakei subsp. sakei (strain 23K) (Lactobacillus sakei subsp. sakei).